The chain runs to 409 residues: Calsequestrin-2 (409 aa).

The N-terminal stretch at 1–19 (MKRAHLFVVGVYLLSSCRA) is a signal peptide. At tyrosine 282 the chain carries Phosphotyrosine. Asparagine 335 carries an N-linked (GlcNAc...) asparagine glycan. The segment at 364 to 409 (DVLSGKINTEDDDNEDEDDDDDNDDDDDDNGNSDEEDNDDSDEDDE) is disordered. Residues 373-409 (EDDDNEDEDDDDDNDDDDDDNGNSDEEDNDDSDEDDE) show a composition bias toward acidic residues.

It belongs to the calsequestrin family. In terms of assembly, monomer, homodimer and homooligomer. Mostly monomeric in the absence of calcium. Forms higher oligomers in a calcium-dependent manner. Dimers associate to form tetramers, that then form linear homomer chains. Interacts with ASPH and TRDN. Phosphorylation in the C-terminus, probably by CK2, moderately increases calcium buffering capacity. In terms of processing, N-glycosylated. As to expression, detected in heart muscle (at protein level).

It is found in the sarcoplasmic reticulum lumen. Functionally, calsequestrin is a high-capacity, moderate affinity, calcium-binding protein and thus acts as an internal calcium store in muscle. Calcium ions are bound by clusters of acidic residues at the protein surface, especially at the interface between subunits. Can bind around 60 Ca(2+) ions. Regulates the release of lumenal Ca(2+) via the calcium release channel RYR2; this plays an important role in triggering muscle contraction. Plays a role in excitation-contraction coupling in the heart and in regulating the rate of heart beats. The sequence is that of Calsequestrin-2 (CASQ2) from Oryctolagus cuniculus (Rabbit).